The sequence spans 49 residues: Large ribosomal subunit protein bL33B (49 aa).

It belongs to the bacterial ribosomal protein bL33 family.

The polypeptide is Large ribosomal subunit protein bL33B (Bacillus anthracis).